The primary structure comprises 314 residues: tRNA dimethylallyltransferase 2 (314 aa).

Residue 8-15 participates in ATP binding; the sequence is GPTGSGKS. Residue 10–15 participates in substrate binding; it reads TGSGKS.

It belongs to the IPP transferase family. In terms of assembly, monomer. Requires Mg(2+) as cofactor.

The catalysed reaction is adenosine(37) in tRNA + dimethylallyl diphosphate = N(6)-dimethylallyladenosine(37) in tRNA + diphosphate. Functionally, catalyzes the transfer of a dimethylallyl group onto the adenine at position 37 in tRNAs that read codons beginning with uridine, leading to the formation of N6-(dimethylallyl)adenosine (i(6)A). This Mycobacterium marinum (strain ATCC BAA-535 / M) protein is tRNA dimethylallyltransferase 2.